The chain runs to 149 residues: Putative pre-16S rRNA nuclease (149 aa).

The protein belongs to the YqgF nuclease family.

The protein resides in the cytoplasm. Its function is as follows. Could be a nuclease involved in processing of the 5'-end of pre-16S rRNA. This chain is Putative pre-16S rRNA nuclease, found in Burkholderia ambifaria (strain MC40-6).